The following is a 486-amino-acid chain: Bifunctional protein HldE (486 aa).

Residues 1–331 (MSTNVADLLH…NALTAESVPV (331 aa)) form a ribokinase region. 207–210 (NLGE) lines the ATP pocket. The active site involves Asp276. The tract at residues 358 to 486 (VTNGCFDLLH…STTKLIEKGH (129 aa)) is cytidylyltransferase.

The protein in the N-terminal section; belongs to the carbohydrate kinase PfkB family. In the C-terminal section; belongs to the cytidylyltransferase family. As to quaternary structure, homodimer.

The enzyme catalyses D-glycero-beta-D-manno-heptose 7-phosphate + ATP = D-glycero-beta-D-manno-heptose 1,7-bisphosphate + ADP + H(+). It carries out the reaction D-glycero-beta-D-manno-heptose 1-phosphate + ATP + H(+) = ADP-D-glycero-beta-D-manno-heptose + diphosphate. The protein operates within nucleotide-sugar biosynthesis; ADP-L-glycero-beta-D-manno-heptose biosynthesis; ADP-L-glycero-beta-D-manno-heptose from D-glycero-beta-D-manno-heptose 7-phosphate: step 1/4. It functions in the pathway nucleotide-sugar biosynthesis; ADP-L-glycero-beta-D-manno-heptose biosynthesis; ADP-L-glycero-beta-D-manno-heptose from D-glycero-beta-D-manno-heptose 7-phosphate: step 3/4. Functionally, catalyzes the phosphorylation of D-glycero-D-manno-heptose 7-phosphate at the C-1 position to selectively form D-glycero-beta-D-manno-heptose-1,7-bisphosphate. Its function is as follows. Catalyzes the ADP transfer from ATP to D-glycero-beta-D-manno-heptose 1-phosphate, yielding ADP-D-glycero-beta-D-manno-heptose. In Koribacter versatilis (strain Ellin345), this protein is Bifunctional protein HldE.